Here is a 249-residue protein sequence, read N- to C-terminus: Voltage-gated potassium channel subunit beta-3 (249 aa).

Residues Asn44, Ser74, Arg75, Gln100, Trp129, Ser130, Pro131, Leu132, Ala133, Cys134, Lys140, Lys150, Gly209, Ser211, Gln215, and Glu218 each contribute to the NADP(+) site.

This sequence belongs to the shaker potassium channel beta subunit family. In terms of assembly, forms heteromultimeric complex with alpha subunits. Interacts with KCNA5 and KCNB2. Strong expression in brain, with highest levels in neocortical and allocortical regions, hippocampus, olfactory bulb and cerebellum. Also strong in kidney. Weak expression in lung, skeletal muscle and heart.

The protein resides in the cytoplasm. Regulatory subunit of the voltage-gated potassium (Kv) channels composed of pore-forming and potassium-conducting alpha subunits and of regulatory beta subunit. The beta-3/KCNAB3 subunit may mediate closure of potassium channels. Enhances the expression of Kv2.2/KCNB2 alpha subunit-containing Kv channels but not Kv2.1/KCNB1. May display nicotinamide adenine dinucleotide phosphate (NADPH)-dependent aldoketoreductase activity. The binding of oxidized and reduced NADP(H) cofactors may be required for the regulation of potassium channel activity. The chain is Voltage-gated potassium channel subunit beta-3 from Mus musculus (Mouse).